An 82-amino-acid chain; its full sequence is Small ribosomal subunit protein bS18 (82 aa).

The interval 1–25 is disordered; that stretch reads MTEMNQTAIRRPFHRRRKTCPFSGT.

Belongs to the bacterial ribosomal protein bS18 family. In terms of assembly, part of the 30S ribosomal subunit. Forms a tight heterodimer with protein bS6.

Its function is as follows. Binds as a heterodimer with protein bS6 to the central domain of the 16S rRNA, where it helps stabilize the platform of the 30S subunit. The sequence is that of Small ribosomal subunit protein bS18 from Bartonella henselae (strain ATCC 49882 / DSM 28221 / CCUG 30454 / Houston 1) (Rochalimaea henselae).